The following is a 135-amino-acid chain: Transmembrane protein 107 (135 aa).

4 helical membrane passes run L7 to W27, V55 to V75, A83 to H103, and Y110 to L130.

Its subcellular location is the membrane. In terms of biological role, may play a role in cilia formation and embryonic patterning. The polypeptide is Transmembrane protein 107 (tmem107) (Danio rerio (Zebrafish)).